Reading from the N-terminus, the 490-residue chain is Betaine aldehyde dehydrogenase (490 aa).

K(+) is bound by residues T26, I27, and D93. 150-152 is a binding site for NAD(+); that stretch reads GAW. Catalysis depends on K162, which acts as the Charge relay system. NAD(+) is bound at residue 176–179; it reads KPSE. V180 contacts K(+). 230–233 contributes to the NAD(+) binding site; it reads GVAS. L246 contacts K(+). The Proton acceptor role is filled by E252. 3 residues coordinate NAD(+): G254, C286, and E387. Residue C286 is the Nucleophile of the active site. C286 carries the post-translational modification Cysteine sulfenic acid (-SOH). The K(+) site is built by K457 and G460. E464 acts as the Charge relay system in catalysis.

This sequence belongs to the aldehyde dehydrogenase family. As to quaternary structure, dimer of dimers. It depends on K(+) as a cofactor.

It catalyses the reaction betaine aldehyde + NAD(+) + H2O = glycine betaine + NADH + 2 H(+). The protein operates within amine and polyamine biosynthesis; betaine biosynthesis via choline pathway; betaine from betaine aldehyde: step 1/1. In terms of biological role, involved in the biosynthesis of the osmoprotectant glycine betaine. Catalyzes the irreversible oxidation of betaine aldehyde to the corresponding acid. The protein is Betaine aldehyde dehydrogenase of Klebsiella pneumoniae (strain 342).